A 256-amino-acid chain; its full sequence is 5-keto-4-deoxy-D-glucarate aldolase (256 aa).

His50 acts as the Proton acceptor in catalysis. Residue Gln151 participates in substrate binding. Residue Glu153 participates in Mg(2+) binding. Substrate is bound by residues Ser178 and Asp179. Asp179 serves as a coordination point for Mg(2+).

This sequence belongs to the HpcH/HpaI aldolase family. KDGluc aldolase subfamily. As to quaternary structure, homohexamer; trimer of dimers. It depends on Mg(2+) as a cofactor.

It catalyses the reaction 5-dehydro-4-deoxy-D-glucarate = 2-hydroxy-3-oxopropanoate + pyruvate. The catalysed reaction is 2-dehydro-3-deoxy-D-glucarate = 2-hydroxy-3-oxopropanoate + pyruvate. It functions in the pathway carbohydrate acid metabolism; galactarate degradation; D-glycerate from galactarate: step 2/3. Functionally, catalyzes the reversible retro-aldol cleavage of both 5-keto-4-deoxy-D-glucarate and 2-keto-3-deoxy-D-glucarate to pyruvate and tartronic semialdehyde. The polypeptide is 5-keto-4-deoxy-D-glucarate aldolase (Escherichia fergusonii (strain ATCC 35469 / DSM 13698 / CCUG 18766 / IAM 14443 / JCM 21226 / LMG 7866 / NBRC 102419 / NCTC 12128 / CDC 0568-73)).